Consider the following 63-residue polypeptide: Insect toxin TbIT-1 (63 aa).

One can recognise an LCN-type CS-alpha/beta domain in the interval 2–63; the sequence is KEGYPVDSRG…VYDNASNKCB (62 aa). 4 disulfides stabilise this stretch: Cys12-Cys62, Cys16-Cys38, Cys24-Cys43, and Cys28-Cys45.

This sequence belongs to the long (4 C-C) scorpion toxin superfamily. Sodium channel inhibitor family. Beta subfamily. In terms of tissue distribution, expressed by the venom gland.

It is found in the secreted. Functionally, beta toxins bind voltage-independently at site-4 of sodium channels (Nav) and shift the voltage of activation toward more negative potentials thereby affecting sodium channel activation and promoting spontaneous and repetitive firing. This toxin is only active against insects. This chain is Insect toxin TbIT-1, found in Tityus bahiensis (Brazilian scorpion).